The sequence spans 277 residues: Probable endonuclease 4 (277 aa).

Histidine 70, histidine 108, glutamate 143, aspartate 176, histidine 179, histidine 210, aspartate 223, histidine 225, and glutamate 255 together coordinate Zn(2+).

Belongs to the AP endonuclease 2 family. The cofactor is Zn(2+).

It catalyses the reaction Endonucleolytic cleavage to 5'-phosphooligonucleotide end-products.. Its function is as follows. Endonuclease IV plays a role in DNA repair. It cleaves phosphodiester bonds at apurinic or apyrimidinic (AP) sites, generating a 3'-hydroxyl group and a 5'-terminal sugar phosphate. The protein is Probable endonuclease 4 of Mycoplasmopsis synoviae (strain 53) (Mycoplasma synoviae).